A 355-amino-acid chain; its full sequence is 1D-myo-inositol 2-acetamido-2-deoxy-alpha-D-glucopyranoside deacetylase 3 (355 aa).

H31, D34, and H169 together coordinate Zn(2+).

It belongs to the MshB deacetylase family. It depends on Zn(2+) as a cofactor.

The catalysed reaction is 1D-myo-inositol 2-acetamido-2-deoxy-alpha-D-glucopyranoside + H2O = 1D-myo-inositol 2-amino-2-deoxy-alpha-D-glucopyranoside + acetate. Its function is as follows. Catalyzes the deacetylation of 1D-myo-inositol 2-acetamido-2-deoxy-alpha-D-glucopyranoside (GlcNAc-Ins) in the mycothiol biosynthesis pathway. The sequence is that of 1D-myo-inositol 2-acetamido-2-deoxy-alpha-D-glucopyranoside deacetylase 3 from Catenulispora acidiphila (strain DSM 44928 / JCM 14897 / NBRC 102108 / NRRL B-24433 / ID139908).